The primary structure comprises 98 residues: NADH-ubiquinone oxidoreductase chain 4L (98 aa).

The next 3 helical transmembrane spans lie at 1-21 (MTLIHMNILMAFSMSLMGLLM), 29-49 (ALLCLEGMMLSLFVLAALTIL), and 61-81 (IILLVFAACEAAIGLALLVMV).

Belongs to the complex I subunit 4L family. In terms of assembly, core subunit of respiratory chain NADH dehydrogenase (Complex I) which is composed of 45 different subunits.

It is found in the mitochondrion inner membrane. The enzyme catalyses a ubiquinone + NADH + 5 H(+)(in) = a ubiquinol + NAD(+) + 4 H(+)(out). Its function is as follows. Core subunit of the mitochondrial membrane respiratory chain NADH dehydrogenase (Complex I) which catalyzes electron transfer from NADH through the respiratory chain, using ubiquinone as an electron acceptor. Part of the enzyme membrane arm which is embedded in the lipid bilayer and involved in proton translocation. This Balaenoptera physalus (Fin whale) protein is NADH-ubiquinone oxidoreductase chain 4L (MT-ND4L).